Consider the following 607-residue polypeptide: Albumin (607 aa).

A signal peptide spans 1-18 (MKWVTFVSLLFLFSSAYF). Residues 19 to 24 (RGVLRR) constitute a propeptide that is removed on maturation. Albumin domains lie at 19 to 209 (RGVL…DALK), 210 to 402 (ERIL…QFTP), and 403 to 600 (LVEE…KLVA). His27 is a binding site for Cu cation. A Phosphoserine modification is found at Ser29. Residues Glu30 and Asp37 each contribute to the Ca(2+) site. A disulfide bond links Cys77 and Cys86. Ser82 and Ser89 each carry phosphoserine. His91 lines the Zn(2+) pocket. Intrachain disulfides connect Cys99–Cys115, Cys114–Cys125, Cys147–Cys192, Cys191–Cys200, Cys223–Cys269, and Cys268–Cys276. The residue at position 107 (Thr107) is a Phosphothreonine. Lys228 carries the N6-succinyllysine modification. Ca(2+) is bound at residue Glu267. Zn(2+) is bound by residues His270 and Asp272. Positions 272, 275, 278, and 282 each coordinate Ca(2+). Cystine bridges form between Cys288–Cys302, Cys301–Cys312, Cys339–Cys384, Cys383–Cys392, Cys415–Cys461, Cys460–Cys471, Cys484–Cys500, and Cys499–Cys510. Ser442 bears the Phosphoserine mark. Phosphothreonine is present on residues Thr443 and Thr445. The residue at position 512 (Ser512) is a Phosphoserine. Disulfide bonds link Cys537-Cys582 and Cys581-Cys590. N6-methyllysine is present on Lys557. Thr569 carries the post-translational modification Phosphothreonine. Lys587 is subject to N6-succinyllysine.

It belongs to the ALB/AFP/VDB family. In terms of assembly, interacts with FCGRT; this interaction regulates ALB homeostasis. Interacts with TASOR. In plasma, occurs in a covalently-linked complex with chromophore-bound alpha-1-microglobulin; this interaction does not prevent fatty acid binding to ALB. In terms of processing, phosphorylated by FAM20C in the extracellular medium. In terms of tissue distribution, plasma.

Its subcellular location is the secreted. In terms of biological role, binds water, Ca(2+), Na(+), K(+), fatty acids, hormones, bilirubin and drugs. Its main function is the regulation of the colloidal osmotic pressure of blood. Major zinc transporter in plasma, typically binds about 80% of all plasma zinc. Major calcium and magnesium transporter in plasma, binds approximately 45% of circulating calcium and magnesium in plasma. Potentially has more than two calcium-binding sites and might additionally bind calcium in a non-specific manner. The shared binding site between zinc and calcium at residue Asp-272 suggests a crosstalk between zinc and calcium transport in the blood. The rank order of affinity is zinc &gt; calcium &gt; magnesium. Binds to the bacterial siderophore enterobactin and inhibits enterobactin-mediated iron uptake of E.coli from ferric transferrin, and may thereby limit the utilization of iron and growth of enteric bacteria such as E.coli. Does not prevent iron uptake by the bacterial siderophore aerobactin. This chain is Albumin (ALB), found in Equus asinus (Donkey).